The following is a 585-amino-acid chain: Eukaryotic translation initiation factor 3 subunit D (585 aa).

Over residues 110 to 130 (GGGTVFRGRGQRGVGQRGGRA) the composition is skewed to gly residues. The segment at 110-152 (GGGTVFRGRGQRGVGQRGGRAGFQRVGAGRGQGGDRYYDNRSA) is disordered. Positions 300-314 (SIDLVTVNENAADAP) are RNA gate. The interval 560 to 585 (VPPNTFEEDDEAAEEQEEKAEDESEE) is disordered. Residues 565-585 (FEEDDEAAEEQEEKAEDESEE) are compositionally biased toward acidic residues.

The protein belongs to the eIF-3 subunit D family. Component of the eukaryotic translation initiation factor 3 (eIF-3) complex.

The protein localises to the cytoplasm. Its function is as follows. mRNA cap-binding component of the eukaryotic translation initiation factor 3 (eIF-3) complex, which is involved in protein synthesis of a specialized repertoire of mRNAs and, together with other initiation factors, stimulates binding of mRNA and methionyl-tRNAi to the 40S ribosome. The eIF-3 complex specifically targets and initiates translation of a subset of mRNAs involved in cell proliferation. In the eIF-3 complex, eif3d specifically recognizes and binds the 7-methylguanosine cap of a subset of mRNAs. The polypeptide is Eukaryotic translation initiation factor 3 subunit D (Aspergillus fumigatus (strain CBS 144.89 / FGSC A1163 / CEA10) (Neosartorya fumigata)).